Here is a 304-residue protein sequence, read N- to C-terminus: Negative regulator of the PHO system (304 aa).

One can recognise a Protein kinase domain in the interval 7–297 (FKQLEKVGNG…AKDALNHPWF (291 aa)). Residues 13-21 (VGNGTYATV) and lysine 36 contribute to the ATP site. Aspartate 133 serves as the catalytic Proton acceptor.

It belongs to the protein kinase superfamily. CMGC Ser/Thr protein kinase family. CDC2/CDKX subfamily. Interacts with a number of cyclins.

It carries out the reaction L-seryl-[protein] + ATP = O-phospho-L-seryl-[protein] + ADP + H(+). The enzyme catalyses L-threonyl-[protein] + ATP = O-phospho-L-threonyl-[protein] + ADP + H(+). Functionally, when phosphate concentrations are high it phosphorylates the PHO4 transcription factor thus establishing repression. This is Negative regulator of the PHO system (PHO85) from Kluyveromyces lactis (strain ATCC 8585 / CBS 2359 / DSM 70799 / NBRC 1267 / NRRL Y-1140 / WM37) (Yeast).